Consider the following 236-residue polypeptide: Lipoprotein NlpE (236 aa).

The signal sequence occupies residues 1–20 (MVKKAIVTAMAVISLFTLMG). C21 carries N-palmitoyl cysteine lipidation. The S-diacylglycerol cysteine moiety is linked to residue C21. The N-terminal domain stretch occupies residues 21-100 (CNNRAEVDTL…WARTADKLVL (80 aa)). Over 21-236 (CNNRAEVDTL…PNQDCSSLGQ (216 aa)) the chain is Periplasmic. Residues 51–54 (CADC) carry the CXXC motif. Residues 126 to 236 (PIESQFNYTL…PNQDCSSLGQ (111 aa)) form a C-terminal domain region. The tract at residues 144–156 (MTPMTLRGMYFYM) is could contain a copper-binding motif. C165 and C231 form a disulfide bridge.

As to quaternary structure, probably exists as a monomer in vivo, can however form homodimers which swap domains. Palmitoylated. Post-translationally, seems to only form a disulfide bond between Cys-165 and Cys-231. The 2 other cysteine residues may however be chemically active.

It localises to the cell outer membrane. Its function is as follows. Involved in copper homeostasis, could be involved in both copper efflux and the delivery of copper to copper-dependent enzymes. Required for efficient binding of stationary phase cells to hydrophobic surfaces, part of the process of biofilm formation. Functions during envelope stress responses; when overproduced induces degP through the activation of the two-component envelope stress response system CpxA/CpxR. DegP induction seems to require membrane anchoring of this protein. Structural changes and/or interaction of the CXXC motif with its environment may lead to activation of the Cpx stress response. The polypeptide is Lipoprotein NlpE (Escherichia coli (strain K12)).